Consider the following 133-residue polypeptide: Salmonella pathogenicity island 2 protein C (133 aa).

Interacts with the mammalian NIPSNAP3A and HOOK3 proteins in infected cells.

The protein localises to the secreted. Its subcellular location is the cytoplasm. Virulence protein that plays a central role in mammalian macrophage infection, by inhibiting phagosome-lysosome fusion and cellular trafficking, including trafficking of organelles that are devoid of Salmonella. May act by disrupting the function of the mammalian HOOK3 protein, a protein involved in the cellular traffic. Also required for actin ADP-ribosylase SpvB activity. The polypeptide is Salmonella pathogenicity island 2 protein C (spiC) (Salmonella typhimurium (strain 14028s / SGSC 2262)).